A 183-amino-acid polypeptide reads, in one-letter code: Lipocalin (183 aa).

Residues 1-20 (MKGLVLSFALVALSALCVYG) form the signal peptide. C83 and C179 are joined by a disulfide.

The protein belongs to the calycin superfamily. Lipocalin family. Monomer. As to expression, expressed mainly in choroid plexus. Much lower expression in other brain areas, and absent from liver.

It is found in the secreted. Functionally, might have a transport function across the blood brain barrier. Is supposed to have similar functions as a transthyretin which must have evolved after the stage of the amphibians in evolution. This is Lipocalin from Rhinella marina (Cane toad).